Reading from the N-terminus, the 691-residue chain is MEASRGPPRVKNKAAAPVQISAEQLLREATDRQEEALQKPTQRFEDLEELHEYQGRKRKEFESYCQRSGFNLKNWLQYAQWELEQKEYARSRSVFERALNLHANKVTLWIRYVEAELKSRNINFARNLLDRAVTHLPRVDKLWYKYVWVEEMLGNIPGVRQVFERWMEWQPDEAAWSAFIKLEQRYGEYDRAREIFTRFTMVHPEPRNWIKWSKFEEEYGTSDRVREVFERAIEELSKYGDEFVEERLFIAYARYEAKLHDLDRARAIYKFGLENLPRSKAMLLHKEYTTFEKQYGDREGVEDVVLSKRRRHYEDLVRENPKNYDVWFDYARLEEASGDIDRTREVYEKAIAQVPPTQAKRHWRRYIYLWIFFALWEETEAKNPERARQVYDTCLKLIPHRTFTFAKVWMHKAHFEIRQGDLAAARKTLGRAIGMCPKDRLFKGYIEMEQKLYEFGRCRILYEKHIAYNPANCSTWVKWAELERGLDDLDRARAILDMGIAQPVLDMPEVVWKSYIDFEEEEGEYDKTRSLYERLLDKADHPKVWISYAQFEINIPEEAGEGADEEQEQPVSDEAKARARRVFERAHQGFKDKEMKAERVSILNAWLVFEKTHGSAEDIEKIEKQMPRRTKKKRKLDDDTWEEYVDYIFPADEQVGKNLMNMMAKARARKQAEAEAAAKAAAADDGGESGE.

16 HAT repeats span residues 52 to 84, 86 to 118, 120 to 152, 154 to 185, 187 to 218, 220 to 258, 260 to 294, 304 to 336, 338 to 372, 382 to 418, 420 to 451, 453 to 485, 487 to 521, 523 to 554, 574 to 612, and 617 to 650; these read EYQG…WELE, KEYA…AELK, RNIN…VEEM, GNIP…LEQR, GEYD…FEEE, GTSD…YEAK, HDLD…FEKQ, VVLS…LEEA, GDID…LWIF, KNPE…FEIR, GDLA…MEQK, YEFG…LERG, DDLD…FEEE, GEYD…FEIN, EAKA…FEKT, and EDIE…YIFP.

This sequence belongs to the crooked-neck family. Associated with the spliceosome.

It is found in the nucleus. Its function is as follows. Involved in pre-mRNA splicing and cell cycle progression. Required for the spliceosome assembly and initiation of the DNA replication. The protein is Pre-mRNA-splicing factor CLF1 (CLF1) of Pyricularia oryzae (strain 70-15 / ATCC MYA-4617 / FGSC 8958) (Rice blast fungus).